Reading from the N-terminus, the 462-residue chain is NAD-capped RNA hydrolase NUDT12 (462 aa).

An N6-succinyllysine modification is found at Lys-10. 3 ANK repeats span residues Glu-11–Asn-40, Asn-45–Leu-74, and Ala-78–Leu-98. An N6-succinyllysine modification is found at Lys-185. Zn(2+) contacts are provided by Cys-284 and Cys-287. Residue Lys-292 is modified to N6-succinyllysine. Zn(2+) is bound by residues Cys-302 and Cys-307. Residues Tyr-318, Ala-354–Phe-356, Glu-370, Glu-374, and Glu-415 each bind substrate. Residues Pro-319–Lys-453 enclose the Nudix hydrolase domain. Positions 354, 370, 374, and 415 each coordinate Mg(2+). A Nudix box motif is present at residues Gly-355–Gly-376. Residues Pro-460–Leu-462 carry the Microbody targeting signal motif.

The protein belongs to the Nudix hydrolase family. NudC subfamily. In terms of assembly, homodimer. Homodimerization is essential for its catalytic activity and protein stability. Interacts (via ANK repeats) with BLMH. It depends on Mg(2+) as a cofactor. Requires Zn(2+) as cofactor. As to expression, expressed abundantly in the liver and kidney.

The protein resides in the cytoplasm. It is found in the peroxisome. Its subcellular location is the cytoplasmic granule. It catalyses the reaction a 5'-end NAD(+)-phospho-ribonucleoside in mRNA + H2O = a 5'-end phospho-adenosine-phospho-ribonucleoside in mRNA + beta-nicotinamide D-ribonucleotide + 2 H(+). The enzyme catalyses NAD(+) + H2O = beta-nicotinamide D-ribonucleotide + AMP + 2 H(+). The catalysed reaction is NADH + H2O = reduced beta-nicotinamide D-ribonucleotide + AMP + 2 H(+). It carries out the reaction NADPH + H2O = reduced beta-nicotinamide D-ribonucleotide + adenosine 2',5'-bisphosphate + 2 H(+). Functionally, mRNA decapping enzyme that specifically removes the nicotinamide adenine dinucleotide (NAD) cap from a subset of mRNAs by hydrolyzing the diphosphate linkage to produce nicotinamide mononucleotide (NMN) and 5' monophosphate mRNA. The NAD-cap is present at the 5'-end of some RNAs; in contrast to the canonical N7 methylguanosine (m7G) cap, the NAD cap promotes mRNA decay. Preferentially acts on NAD-capped transcripts in response to nutrient stress. Also acts on free nicotinamide adenine dinucleotide molecules: hydrolyzes NAD(H) into NMN(H) and AMP, and NADPH into NMNH and 2',5'-ADP. May act to regulate the concentration of peroxisomal nicotinamide nucleotide cofactors required for oxidative metabolism in this organelle. Regulates the levels of circadian clock components PER1, PER2, PER3 and CRY2 in the liver. The chain is NAD-capped RNA hydrolase NUDT12 from Mus musculus (Mouse).